Consider the following 199-residue polypeptide: Probable nicotinate-nucleotide adenylyltransferase (199 aa).

It belongs to the NadD family.

The enzyme catalyses nicotinate beta-D-ribonucleotide + ATP + H(+) = deamido-NAD(+) + diphosphate. The protein operates within cofactor biosynthesis; NAD(+) biosynthesis; deamido-NAD(+) from nicotinate D-ribonucleotide: step 1/1. Its function is as follows. Catalyzes the reversible adenylation of nicotinate mononucleotide (NaMN) to nicotinic acid adenine dinucleotide (NaAD). This is Probable nicotinate-nucleotide adenylyltransferase from Corynebacterium jeikeium (strain K411).